The primary structure comprises 101 residues: Small ribosomal subunit protein uS14 (101 aa).

Residues 51–70 (LPRDSSPSRQRNRCRQTGRP) form a disordered region.

Belongs to the universal ribosomal protein uS14 family. As to quaternary structure, part of the 30S ribosomal subunit. Contacts proteins S3 and S10.

Binds 16S rRNA, required for the assembly of 30S particles and may also be responsible for determining the conformation of the 16S rRNA at the A site. This Salmonella arizonae (strain ATCC BAA-731 / CDC346-86 / RSK2980) protein is Small ribosomal subunit protein uS14.